The following is a 380-amino-acid chain: Cell division protein FtsZ 2 (380 aa).

Residues 47–51 (GAGNN), 134–136 (GTG), E165, R168, and D211 contribute to the GTP site.

It belongs to the FtsZ family. Homodimer. Polymerizes to form a dynamic ring structure in a strictly GTP-dependent manner. Interacts directly with several other division proteins.

The protein resides in the cytoplasm. Its function is as follows. Essential cell division protein that forms a contractile ring structure (Z ring) at the future cell division site. The regulation of the ring assembly controls the timing and the location of cell division. One of the functions of the FtsZ ring is to recruit other cell division proteins to the septum to produce a new cell wall between the dividing cells. Binds GTP and shows GTPase activity. The polypeptide is Cell division protein FtsZ 2 (Methanocaldococcus jannaschii (strain ATCC 43067 / DSM 2661 / JAL-1 / JCM 10045 / NBRC 100440) (Methanococcus jannaschii)).